Reading from the N-terminus, the 206-residue chain is Methylthioribulose-1-phosphate dehydratase (206 aa).

Histidine 96 and histidine 98 together coordinate Zn(2+).

It belongs to the aldolase class II family. MtnB subfamily. The cofactor is Zn(2+).

It catalyses the reaction 5-(methylsulfanyl)-D-ribulose 1-phosphate = 5-methylsulfanyl-2,3-dioxopentyl phosphate + H2O. It functions in the pathway amino-acid biosynthesis; L-methionine biosynthesis via salvage pathway; L-methionine from S-methyl-5-thio-alpha-D-ribose 1-phosphate: step 2/6. Its function is as follows. Catalyzes the dehydration of methylthioribulose-1-phosphate (MTRu-1-P) into 2,3-diketo-5-methylthiopentyl-1-phosphate (DK-MTP-1-P). The polypeptide is Methylthioribulose-1-phosphate dehydratase (Exiguobacterium sibiricum (strain DSM 17290 / CCUG 55495 / CIP 109462 / JCM 13490 / 255-15)).